The chain runs to 369 residues: MSSALLLAPGDLIEKAKRELEQRSIAPLLREKNSTEAKSKLKEDGEKKNKSEKEENKIHDDRRVESQESEGSGSADCQRGAGSRGADCATSTGGGDGGAGARTGIGGGGVGRVDSRSGGRGGQGAASDGKGVGKSKTGADRVANDGATRDVGTSEVSSSGITSGGLQGRGGLVAKSSECGGEPLDRTGGCSGNSKTEGEEAKVGGGDRRIGGLATQGIADFVKKKIGVEVQVFSKGMSNFFTVDKSLLKRGGLGREDILHQSDIVKEIRASDKKVKIIPLSTVKRMIAEFGGTEEDEIKAVQTQSSSIRYISNRMEDVSRAKAMFTAPTGDEGWKEVAKAATQRPNIMAYVHEGEGDGLKELLHLIDHI.

A disordered region spans residues 20–208; sequence LEQRSIAPLL…EEAKVGGGDR (189 aa). Residues 29-66 show a composition bias toward basic and acidic residues; that stretch reads LREKNSTEAKSKLKEDGEKKNKSEKEENKIHDDRRVES. Composition is skewed to gly residues over residues 92–111 and 162–171; these read TGGG…GGVG and TSGGLQGRGG. Residues 196–208 are compositionally biased toward basic and acidic residues; sequence TEGEEAKVGGGDR.

The protein belongs to the orbivirus VP6 family.

The protein resides in the virion. The chain is Protein VP6 (S9) from African horse sickness virus 3 (AHSV-3).